Consider the following 130-residue polypeptide: Small ribosomal subunit protein uS9 (130 aa).

The segment at lysine 99–arginine 130 is disordered. Positions lysine 111–arginine 130 are enriched in basic residues.

It belongs to the universal ribosomal protein uS9 family.

This Staphylococcus aureus (strain Mu3 / ATCC 700698) protein is Small ribosomal subunit protein uS9.